Here is a 306-residue protein sequence, read N- to C-terminus: MSGKHVAVLMGGFSSERPVSLSSGAACADALEAEGYRVSRVDVGRDVAAVLADLRPDIVFNALHGPFGEDGTIQGILEYLEIPYTHSGVLASALAMDKAQAKHVAKAAGIPVADALIMDRREFGNAHPMKPPYVVKPVREGSSFGVVIVKEDQSHPPQVITSSEWRYGDRVMVERYIAGRELTCGVMGDVALGVTEIIPQGHAFYDYDSKYVKGGSAHVIPAQISPNIYQKIQSLAVKAHQAIGCRGVSRSDFRFDDRGEGELIWLEINTQPGMTPTSLVPEMAQHAGLQFGEFLRWMVEDASCLR.

The ATP-grasp domain maps to 102–300 (KHVAKAAGIP…FGEFLRWMVE (199 aa)). Residue 128-183 (PMKPPYVVKPVREGSSFGVVIVKEDQSHPPQVITSSEWRYGDRVMVERYIAGRELT) coordinates ATP. The Mg(2+) site is built by aspartate 252, glutamate 267, and asparagine 269.

This sequence belongs to the D-alanine--D-alanine ligase family. Mg(2+) is required as a cofactor. Mn(2+) serves as cofactor.

The protein localises to the cytoplasm. The enzyme catalyses 2 D-alanine + ATP = D-alanyl-D-alanine + ADP + phosphate + H(+). Its pathway is cell wall biogenesis; peptidoglycan biosynthesis. In terms of biological role, cell wall formation. The polypeptide is D-alanine--D-alanine ligase (Sinorhizobium fredii (strain NBRC 101917 / NGR234)).